The chain runs to 254 residues: Leucyl/phenylalanyl-tRNA--protein transferase (254 aa).

Belongs to the L/F-transferase family.

The protein localises to the cytoplasm. It carries out the reaction N-terminal L-lysyl-[protein] + L-leucyl-tRNA(Leu) = N-terminal L-leucyl-L-lysyl-[protein] + tRNA(Leu) + H(+). It catalyses the reaction N-terminal L-arginyl-[protein] + L-leucyl-tRNA(Leu) = N-terminal L-leucyl-L-arginyl-[protein] + tRNA(Leu) + H(+). The enzyme catalyses L-phenylalanyl-tRNA(Phe) + an N-terminal L-alpha-aminoacyl-[protein] = an N-terminal L-phenylalanyl-L-alpha-aminoacyl-[protein] + tRNA(Phe). Functionally, functions in the N-end rule pathway of protein degradation where it conjugates Leu, Phe and, less efficiently, Met from aminoacyl-tRNAs to the N-termini of proteins containing an N-terminal arginine or lysine. This Burkholderia cenocepacia (strain ATCC BAA-245 / DSM 16553 / LMG 16656 / NCTC 13227 / J2315 / CF5610) (Burkholderia cepacia (strain J2315)) protein is Leucyl/phenylalanyl-tRNA--protein transferase.